The following is a 380-amino-acid chain: Alcohol dehydrogenase-like 4 (380 aa).

Zn(2+)-binding residues include cysteine 47, threonine 49, histidine 70, cysteine 100, cysteine 103, cysteine 106, cysteine 114, and cysteine 180. 2 residues coordinate an alcohol: threonine 49 and histidine 70. Threonine 49 serves as a coordination point for NAD(+). NAD(+) contacts are provided by residues glycine 205–glycine 210, aspartate 229, lysine 234, leucine 298–valine 300, phenylalanine 325, and arginine 375.

The protein belongs to the zinc-containing alcohol dehydrogenase family. Class-III subfamily. In terms of assembly, homodimer. Zn(2+) is required as a cofactor.

Its subcellular location is the cytoplasm. The enzyme catalyses a primary alcohol + NAD(+) = an aldehyde + NADH + H(+). It carries out the reaction a secondary alcohol + NAD(+) = a ketone + NADH + H(+). The polypeptide is Alcohol dehydrogenase-like 4 (Arabidopsis thaliana (Mouse-ear cress)).